The chain runs to 661 residues: UvrABC system protein B (661 aa).

The 158-residue stretch at 23–180 (EGLQKGYRIQ…THLARIGYER (158 aa)) folds into the Helicase ATP-binding domain. Position 36–43 (36–43 (GVTGSGKT)) interacts with ATP. Residues 89–112 (YYDYYQPEAYIPTRDLYIEKNADI) carry the Beta-hairpin motif. One can recognise a Helicase C-terminal domain in the interval 426–592 (QIDDLVNEIA…TIIKPLDEEI (167 aa)). Residues 620-655 (EEYIALLEEEMYKAASELRYEDAARLRDELFNIREK) form the UVR domain.

It belongs to the UvrB family. Forms a heterotetramer with UvrA during the search for lesions. Interacts with UvrC in an incision complex.

The protein resides in the cytoplasm. Functionally, the UvrABC repair system catalyzes the recognition and processing of DNA lesions. A damage recognition complex composed of 2 UvrA and 2 UvrB subunits scans DNA for abnormalities. Upon binding of the UvrA(2)B(2) complex to a putative damaged site, the DNA wraps around one UvrB monomer. DNA wrap is dependent on ATP binding by UvrB and probably causes local melting of the DNA helix, facilitating insertion of UvrB beta-hairpin between the DNA strands. Then UvrB probes one DNA strand for the presence of a lesion. If a lesion is found the UvrA subunits dissociate and the UvrB-DNA preincision complex is formed. This complex is subsequently bound by UvrC and the second UvrB is released. If no lesion is found, the DNA wraps around the other UvrB subunit that will check the other stand for damage. The protein is UvrABC system protein B of Thermosipho africanus (strain TCF52B).